Consider the following 446-residue polypeptide: Histidine--tRNA ligase (446 aa).

This sequence belongs to the class-II aminoacyl-tRNA synthetase family. As to quaternary structure, homodimer.

Its subcellular location is the cytoplasm. It carries out the reaction tRNA(His) + L-histidine + ATP = L-histidyl-tRNA(His) + AMP + diphosphate + H(+). This chain is Histidine--tRNA ligase, found in Burkholderia vietnamiensis (strain G4 / LMG 22486) (Burkholderia cepacia (strain R1808)).